The following is a 175-amino-acid chain: Pycsar effector protein RsPycTM (175 aa).

3 helical membrane-spanning segments follow: residues A17–L37, P44–I64, and A146–I166.

It is found in the cell inner membrane. Functionally, pycsar (pyrimidine cyclase system for antiphage resistance) provides immunity against bacteriophage. The pyrimidine cyclase (PycC) synthesizes cyclic nucleotides in response to infection; these serve as specific second messenger signals. The signals activate the nearby effector, leading to bacterial cell death and abortive phage infection. A clade A Pycsar system. The effector gene of a two-gene Pycsar system. Expression of this and uridylate cyclase RsPycC (AC A0A4R2TZQ0) probably confers resistance to bacteriophage. The genes are probably only expressed in response to bacteriophage infection. Probably only responds to cUMP (produced by its cognate NTP cyclase), acts by impairing membrane integrity. The sequence is that of Pycsar effector protein RsPycTM from Rhizobium sp. (strain PP-F2F-G36).